Here is a 526-residue protein sequence, read N- to C-terminus: Efflux pump aunC (526 aa).

Transmembrane regions (helical) follow at residues 23–43, 64–84, 89–109, 125–145, 155–175, 183–203, 218–238, 254–274, 296–316, 339–359, 360–380, 386–406, 418–438, and 491–511; these read LCYKLVLVTVGLCFCIFCTSL, DVGWYASAYLLTTCAVTLPFG, FFPIKWVYLSALFVFELGSFI, VAGLGGGGLFSGSLLIITQCV, GFIMSIFAVASVIAPLMGGAF, WCFYINLPFGLVSAVVIFFTF, AAGLDPLGTATFLPAIVCLLL, IIALFTLFGVLLACFVGLQLW, LYGFCLNGAMFTFVYYLPIWF, VIFAIISGVLVSATGYFGPFM, LLSAAMASIAAGLLSMLHPSS, IGYQVLLGSSIGMGFQLPVFV, TATALMTFIQLLGGAIFVSVA, and VHTFYLAIGLAAASFLAATVI.

Belongs to the major facilitator superfamily. TCR/Tet family.

The protein resides in the cell membrane. Its function is as follows. Efflux pump; part of the gene cluster that mediates the biosynthesis of aurasperone B, a dimeric gamma-naphthopyrone. This chain is Efflux pump aunC, found in Aspergillus niger (strain ATCC 1015 / CBS 113.46 / FGSC A1144 / LSHB Ac4 / NCTC 3858a / NRRL 328 / USDA 3528.7).